Reading from the N-terminus, the 189-residue chain is Glucose-6-phosphate isomerase (189 aa).

Fe cation is bound by residues H88, H90, E97, and H136.

This sequence belongs to the archaeal-type GPI family. In terms of assembly, homodimer.

Its subcellular location is the cytoplasm. It catalyses the reaction alpha-D-glucose 6-phosphate = beta-D-fructose 6-phosphate. It participates in carbohydrate degradation; glycolysis; D-glyceraldehyde 3-phosphate and glycerone phosphate from D-glucose: step 2/4. The polypeptide is Glucose-6-phosphate isomerase (Thermococcus kodakarensis (strain ATCC BAA-918 / JCM 12380 / KOD1) (Pyrococcus kodakaraensis (strain KOD1))).